The following is a 310-amino-acid chain: MNKDNILHTDTNIKITLFSEVSIGISANSALFFSHLFMLFEKNRSKPIDLYIAFLSLTQLMLLITIGLIAADMFMSRGRWDSTTCQSLIYLHRLLRGFTLCATCLLNVLWTITLSPRSSCLTTFKHKSPHHISGAFLFFCVLYISFGSHLFLSTIATPNLTSDNFMYVTQSCSFLPMSYSRTSMFSTPMAIREALLIGLIGLSSGYMVAFLWRHKNQARHLHSTSLSSKVSPEQRATRTIMILMSFFVVLYILENVVFYSRMTFKDGSMFYCVQIIVSHSYATISPFVFICTEKRIIKLWGSMSSRIVSI.

Residues 1 to 19 (MNKDNILHTDTNIKITLFS) lie on the Extracellular side of the membrane. The helical transmembrane segment at 20–40 (EVSIGISANSALFFSHLFMLF) threads the bilayer. Topologically, residues 41–49 (EKNRSKPID) are cytoplasmic. A helical membrane pass occupies residues 50 to 70 (LYIAFLSLTQLMLLITIGLIA). Topologically, residues 71–93 (ADMFMSRGRWDSTTCQSLIYLHR) are extracellular. Cysteine 85 and cysteine 172 are disulfide-bonded. Residues 94 to 114 (LLRGFTLCATCLLNVLWTITL) traverse the membrane as a helical segment. The Cytoplasmic portion of the chain corresponds to 115–131 (SPRSSCLTTFKHKSPHH). The helical transmembrane segment at 132 to 152 (ISGAFLFFCVLYISFGSHLFL) threads the bilayer. Topologically, residues 153-190 (STIATPNLTSDNFMYVTQSCSFLPMSYSRTSMFSTPMA) are extracellular. A glycan (N-linked (GlcNAc...) asparagine) is linked at asparagine 159. A helical transmembrane segment spans residues 191–211 (IREALLIGLIGLSSGYMVAFL). Residues 212 to 238 (WRHKNQARHLHSTSLSSKVSPEQRATR) lie on the Cytoplasmic side of the membrane. The chain crosses the membrane as a helical span at residues 239–259 (TIMILMSFFVVLYILENVVFY). The Extracellular segment spans residues 260 to 269 (SRMTFKDGSM). Residues 270–290 (FYCVQIIVSHSYATISPFVFI) form a helical membrane-spanning segment. Residues 291–310 (CTEKRIIKLWGSMSSRIVSI) are Cytoplasmic-facing.

This sequence belongs to the G-protein coupled receptor 1 family. Expressed in 1-4% of neurons of the vomeronasal organ. Only one pheromone receptor gene may be expressed in a particular neuron. Not expressed in the main olfactory epithelium.

It localises to the cell membrane. Functionally, putative pheromone receptor implicated in the regulation of social as well as reproductive behavior. This Rattus norvegicus (Rat) protein is Vomeronasal type-1 receptor 97 (Vom1r97).